The chain runs to 269 residues: Energy-coupling factor transporter ATP-binding protein EcfA1 (269 aa).

One can recognise an ABC transporter domain in the interval 8–242 (IVFKNVSFQY…AEELTRIGLD (235 aa)). Position 42-49 (42-49 (GHNGSGKS)) interacts with ATP.

Belongs to the ABC transporter superfamily. Energy-coupling factor EcfA family. In terms of assembly, forms a stable energy-coupling factor (ECF) transporter complex composed of 2 membrane-embedded substrate-binding proteins (S component), 2 ATP-binding proteins (A component) and 2 transmembrane proteins (T component).

It is found in the cell membrane. Its function is as follows. ATP-binding (A) component of a common energy-coupling factor (ECF) ABC-transporter complex. Unlike classic ABC transporters this ECF transporter provides the energy necessary to transport a number of different substrates. This chain is Energy-coupling factor transporter ATP-binding protein EcfA1, found in Staphylococcus aureus (strain Mu50 / ATCC 700699).